The following is a 92-amino-acid chain: MTRSIKKGPFVDAHLQKKVDEQNEKGTHNVIKTWSRRSMITPDFIGHTFAVHDGRKHVPVFVTESMVGHKLGEFAPTKTFKGHVKDDKKARR.

It belongs to the universal ribosomal protein uS19 family.

In terms of biological role, protein S19 forms a complex with S13 that binds strongly to the 16S ribosomal RNA. The polypeptide is Small ribosomal subunit protein uS19 (Bifidobacterium adolescentis (strain ATCC 15703 / DSM 20083 / NCTC 11814 / E194a)).